A 146-amino-acid chain; its full sequence is Probable glycine cleavage system H protein 1, mitochondrial (146 aa).

The transit peptide at 1-30 (MLKTLRFGTRAFGQNLNIAKRNFCTRYTND) directs the protein to the mitochondrion. The Lipoyl-binding domain maps to 41 to 123 (NYRLGITDFA…MGDGWIVEYK (83 aa)). The residue at position 82 (K82) is an N6-lipoyllysine.

This sequence belongs to the GcvH family. The glycine cleavage system is composed of four proteins: P, T, L and H. Requires (R)-lipoate as cofactor.

The protein localises to the mitochondrion. In terms of biological role, the glycine cleavage system catalyzes the degradation of glycine. The H protein shuttles the methylamine group of glycine from the P protein to the T protein. This Dictyostelium discoideum (Social amoeba) protein is Probable glycine cleavage system H protein 1, mitochondrial (gcvH1).